We begin with the raw amino-acid sequence, 318 residues long: Methionyl-tRNA formyltransferase (318 aa).

Position 111-114 (111-114 (SLLP)) interacts with (6S)-5,6,7,8-tetrahydrofolate.

It belongs to the Fmt family.

It carries out the reaction L-methionyl-tRNA(fMet) + (6R)-10-formyltetrahydrofolate = N-formyl-L-methionyl-tRNA(fMet) + (6S)-5,6,7,8-tetrahydrofolate + H(+). Its function is as follows. Attaches a formyl group to the free amino group of methionyl-tRNA(fMet). The formyl group appears to play a dual role in the initiator identity of N-formylmethionyl-tRNA by promoting its recognition by IF2 and preventing the misappropriation of this tRNA by the elongation apparatus. The sequence is that of Methionyl-tRNA formyltransferase from Chlorobium limicola (strain DSM 245 / NBRC 103803 / 6330).